The chain runs to 315 residues: Acetyl-coenzyme A carboxylase carboxyl transferase subunit alpha (315 aa).

The region spanning 35–289 is the CoA carboxyltransferase C-terminal domain; that stretch reads KLSKKRFELM…RKAVAAELKI (255 aa).

This sequence belongs to the AccA family. In terms of assembly, acetyl-CoA carboxylase is a heterohexamer composed of biotin carboxyl carrier protein (AccB), biotin carboxylase (AccC) and two subunits each of ACCase subunit alpha (AccA) and ACCase subunit beta (AccD).

Its subcellular location is the cytoplasm. It catalyses the reaction N(6)-carboxybiotinyl-L-lysyl-[protein] + acetyl-CoA = N(6)-biotinyl-L-lysyl-[protein] + malonyl-CoA. It functions in the pathway lipid metabolism; malonyl-CoA biosynthesis; malonyl-CoA from acetyl-CoA: step 1/1. In terms of biological role, component of the acetyl coenzyme A carboxylase (ACC) complex. First, biotin carboxylase catalyzes the carboxylation of biotin on its carrier protein (BCCP) and then the CO(2) group is transferred by the carboxyltransferase to acetyl-CoA to form malonyl-CoA. This chain is Acetyl-coenzyme A carboxylase carboxyl transferase subunit alpha, found in Francisella tularensis subsp. mediasiatica (strain FSC147).